The chain runs to 358 residues: Methylthioribose-1-phosphate isomerase (358 aa).

Residues 54-56 (RGA), Arg96, and Gln205 contribute to the substrate site. Residue Asp246 is the Proton donor of the active site. 256–257 (SK) is a substrate binding site.

This sequence belongs to the eIF-2B alpha/beta/delta subunits family. MtnA subfamily.

It catalyses the reaction 5-(methylsulfanyl)-alpha-D-ribose 1-phosphate = 5-(methylsulfanyl)-D-ribulose 1-phosphate. It functions in the pathway amino-acid biosynthesis; L-methionine biosynthesis via salvage pathway; L-methionine from S-methyl-5-thio-alpha-D-ribose 1-phosphate: step 1/6. Catalyzes the interconversion of methylthioribose-1-phosphate (MTR-1-P) into methylthioribulose-1-phosphate (MTRu-1-P). This chain is Methylthioribose-1-phosphate isomerase, found in Pseudomonas putida (strain GB-1).